Consider the following 227-residue polypeptide: Cytochrome c oxidase subunit 2 (227 aa).

The Mitochondrial intermembrane segment spans residues 1-14 (MAHPAQLGLQDATS). A helical membrane pass occupies residues 15–45 (PVMEELITFHDHALMAMSLISLLVLYALFST). Residues 46-59 (LTTKMTNTNITDAQ) are Mitochondrial matrix-facing. A helical transmembrane segment spans residues 60 to 87 (EMETIWTILPAIILVLIAFPSLRILYMT). Residues 88–227 (DEVNNPSFTI…IFEMGPVFTL (140 aa)) lie on the Mitochondrial intermembrane side of the membrane. Residues His161, Cys196, Glu198, Cys200, His204, and Met207 each coordinate Cu cation. Glu198 contributes to the Mg(2+) binding site.

It belongs to the cytochrome c oxidase subunit 2 family. As to quaternary structure, component of the cytochrome c oxidase (complex IV, CIV), a multisubunit enzyme composed of 14 subunits. The complex is composed of a catalytic core of 3 subunits MT-CO1, MT-CO2 and MT-CO3, encoded in the mitochondrial DNA, and 11 supernumerary subunits COX4I, COX5A, COX5B, COX6A, COX6B, COX6C, COX7A, COX7B, COX7C, COX8 and NDUFA4, which are encoded in the nuclear genome. The complex exists as a monomer or a dimer and forms supercomplexes (SCs) in the inner mitochondrial membrane with NADH-ubiquinone oxidoreductase (complex I, CI) and ubiquinol-cytochrome c oxidoreductase (cytochrome b-c1 complex, complex III, CIII), resulting in different assemblies (supercomplex SCI(1)III(2)IV(1) and megacomplex MCI(2)III(2)IV(2)). Found in a complex with TMEM177, COA6, COX18, COX20, SCO1 and SCO2. Interacts with TMEM177 in a COX20-dependent manner. Interacts with COX20. Interacts with COX16. The cofactor is Cu cation.

It localises to the mitochondrion inner membrane. It carries out the reaction 4 Fe(II)-[cytochrome c] + O2 + 8 H(+)(in) = 4 Fe(III)-[cytochrome c] + 2 H2O + 4 H(+)(out). Its function is as follows. Component of the cytochrome c oxidase, the last enzyme in the mitochondrial electron transport chain which drives oxidative phosphorylation. The respiratory chain contains 3 multisubunit complexes succinate dehydrogenase (complex II, CII), ubiquinol-cytochrome c oxidoreductase (cytochrome b-c1 complex, complex III, CIII) and cytochrome c oxidase (complex IV, CIV), that cooperate to transfer electrons derived from NADH and succinate to molecular oxygen, creating an electrochemical gradient over the inner membrane that drives transmembrane transport and the ATP synthase. Cytochrome c oxidase is the component of the respiratory chain that catalyzes the reduction of oxygen to water. Electrons originating from reduced cytochrome c in the intermembrane space (IMS) are transferred via the dinuclear copper A center (CU(A)) of subunit 2 and heme A of subunit 1 to the active site in subunit 1, a binuclear center (BNC) formed by heme A3 and copper B (CU(B)). The BNC reduces molecular oxygen to 2 water molecules using 4 electrons from cytochrome c in the IMS and 4 protons from the mitochondrial matrix. The sequence is that of Cytochrome c oxidase subunit 2 (MT-CO2) from Mandrillus leucophaeus (Drill).